A 282-amino-acid polypeptide reads, in one-letter code: ATP synthase gamma chain (282 aa).

The protein belongs to the ATPase gamma chain family. As to quaternary structure, F-type ATPases have 2 components, CF(1) - the catalytic core - and CF(0) - the membrane proton channel. CF(1) has five subunits: alpha(3), beta(3), gamma(1), delta(1), epsilon(1). CF(0) has three main subunits: a, b and c.

Its subcellular location is the cell membrane. In terms of biological role, produces ATP from ADP in the presence of a proton gradient across the membrane. The gamma chain is believed to be important in regulating ATPase activity and the flow of protons through the CF(0) complex. The protein is ATP synthase gamma chain of Clostridium botulinum (strain 657 / Type Ba4).